The chain runs to 392 residues: Imidazolonepropionase (392 aa).

The Fe(3+) site is built by H69 and H71. Zn(2+) contacts are provided by H69 and H71. Residues R78, Y136, and H163 each coordinate 4-imidazolone-5-propanoate. Y136 lines the N-formimidoyl-L-glutamate pocket. H226 lines the Fe(3+) pocket. Residue H226 participates in Zn(2+) binding. Position 229 (Q229) interacts with 4-imidazolone-5-propanoate. Fe(3+) is bound at residue D302. D302 serves as a coordination point for Zn(2+). N-formimidoyl-L-glutamate contacts are provided by N304 and G306. S307 contacts 4-imidazolone-5-propanoate.

This sequence belongs to the metallo-dependent hydrolases superfamily. HutI family. It depends on Zn(2+) as a cofactor. Fe(3+) serves as cofactor.

The protein localises to the cytoplasm. The catalysed reaction is 4-imidazolone-5-propanoate + H2O = N-formimidoyl-L-glutamate. Its pathway is amino-acid degradation; L-histidine degradation into L-glutamate; N-formimidoyl-L-glutamate from L-histidine: step 3/3. In terms of biological role, catalyzes the hydrolytic cleavage of the carbon-nitrogen bond in imidazolone-5-propanoate to yield N-formimidoyl-L-glutamate. It is the third step in the universal histidine degradation pathway. In Salinispora arenicola (strain CNS-205), this protein is Imidazolonepropionase.